Consider the following 636-residue polypeptide: Probable potassium transport system protein Kup (636 aa).

Helical transmembrane passes span 22 to 42 (VGLL…SPLY), 64 to 84 (ILSL…VMFI), 115 to 135 (LMVI…MITP), 150 to 170 (FDGI…ALFL), 182 to 202 (LFGP…VHGI), 220 to 240 (FFVV…LALT), 261 to 281 (WFIL…ALLL), 293 to 313 (LLAP…ATVI), 351 to 371 (IYIG…VIGF), 383 to 403 (VAVT…MLLL), 408 to 428 (PLLA…FFAA), and 433 to 453 (IAQG…LMST).

The protein belongs to the HAK/KUP transporter (TC 2.A.72) family.

It is found in the cell inner membrane. The catalysed reaction is K(+)(in) + H(+)(in) = K(+)(out) + H(+)(out). In terms of biological role, transport of potassium into the cell. Likely operates as a K(+):H(+) symporter. The sequence is that of Probable potassium transport system protein Kup from Pseudomonas putida (strain ATCC 47054 / DSM 6125 / CFBP 8728 / NCIMB 11950 / KT2440).